We begin with the raw amino-acid sequence, 210 residues long: Small ribosomal subunit protein uS3 (210 aa).

Residues 38–106 (LKSFLKKRLY…EVYLNIQEVR (69 aa)) form the KH type-2 domain.

The protein belongs to the universal ribosomal protein uS3 family. In terms of assembly, part of the 30S ribosomal subunit. Forms a tight complex with proteins S10 and S14.

Binds the lower part of the 30S subunit head. Binds mRNA in the 70S ribosome, positioning it for translation. The protein is Small ribosomal subunit protein uS3 of Geotalea daltonii (strain DSM 22248 / JCM 15807 / FRC-32) (Geobacter daltonii).